The chain runs to 238 residues: Endothelin-3 (238 aa).

Positions 1–16 are cleaved as a signal peptide; the sequence is MEPGLWLLFGLTVTSA. The propeptide occupies 17-94; the sequence is AGFVPCSQSG…AEGAPEHHRS (78 aa). Residues 24 to 89 are disordered; the sequence is QSGDAGRRGV…GQEQAAEGAP (66 aa). Cystine bridges form between Cys-97/Cys-111 and Cys-99/Cys-107. Residues 118 to 238 constitute a propeptide that is removed on maturation; the sequence is INTPEQTVPY…PRCLFQEGAP (121 aa). The tract at residues 159 to 173 is endothelin-like; that stretch reads CACVGRYDKACLHFC. The tract at residues 183 to 219 is disordered; it reads SRTAEKTDKEEEGKVEVKDQQSKQALDLHHPKLMPGS. Residues 185–212 show a composition bias toward basic and acidic residues; sequence TAEKTDKEEEGKVEVKDQQSKQALDLHH.

This sequence belongs to the endothelin/sarafotoxin family. As to expression, expressed in trophoblasts and placental stem villi vessels, but not in cultured placental smooth muscle cells.

Its subcellular location is the secreted. Its function is as follows. Endothelins are endothelium-derived vasoconstrictor peptides. This chain is Endothelin-3 (EDN3), found in Homo sapiens (Human).